The chain runs to 230 residues: DNA mismatch repair protein MutH (230 aa).

The protein belongs to the MutH family.

Its subcellular location is the cytoplasm. Its function is as follows. Sequence-specific endonuclease that cleaves unmethylated GATC sequences. It is involved in DNA mismatch repair. This is DNA mismatch repair protein MutH from Citrobacter koseri (strain ATCC BAA-895 / CDC 4225-83 / SGSC4696).